The primary structure comprises 356 residues: S-adenosylmethionine:tRNA ribosyltransferase-isomerase (356 aa).

This sequence belongs to the QueA family. In terms of assembly, monomer.

The protein resides in the cytoplasm. It carries out the reaction 7-aminomethyl-7-carbaguanosine(34) in tRNA + S-adenosyl-L-methionine = epoxyqueuosine(34) in tRNA + adenine + L-methionine + 2 H(+). The protein operates within tRNA modification; tRNA-queuosine biosynthesis. Its function is as follows. Transfers and isomerizes the ribose moiety from AdoMet to the 7-aminomethyl group of 7-deazaguanine (preQ1-tRNA) to give epoxyqueuosine (oQ-tRNA). The sequence is that of S-adenosylmethionine:tRNA ribosyltransferase-isomerase from Escherichia coli (strain ATCC 8739 / DSM 1576 / NBRC 3972 / NCIMB 8545 / WDCM 00012 / Crooks).